The sequence spans 463 residues: Phosphoglycerate transporter protein (463 aa).

Residues 1 to 29 lie on the Cytoplasmic side of the membrane; it reads MLTILKTGQSAHKVPPEKVQATYGRYRIQ. 12 consecutive transmembrane segments (helical) span residues 30-50, 59-79, 106-126, 127-147, 160-180, 188-208, 267-287, 297-317, 326-346, 349-369, 391-411, and 413-433; these read ALLS…NFTL, LDLS…AYGI, IVNV…LVVF, NGLF…NWFP, ISHN…FAIL, ASYI…LVLG, VFVY…LLTV, VAFL…GWLS, MPLA…YWKS, LLMV…PQFL, GFMS…VMVD, and LGWY…ILFC.

This sequence belongs to the major facilitator superfamily. Organophosphate:Pi antiporter (OPA) (TC 2.A.1.4) family.

The protein resides in the cell inner membrane. Its function is as follows. The phosphoglycerate transporter protein is a part of the PGT transport system. It is the membrane bound transporter for phosphoglycerate into salmonella. This chain is Phosphoglycerate transporter protein (pgtP), found in Salmonella typhimurium (strain LT2 / SGSC1412 / ATCC 700720).